The primary structure comprises 293 residues: Bisanhydrobacterioruberin hydratase (293 aa).

A run of 7 helical transmembrane segments spans residues 36–56 (IAVVFPLVGAVTLLASAEGLL), 66–86 (FVLFGTFVMRLPLVAGIFPLV), 89–109 (RAGLALVALTLYSYGIELVGV), 134–154 (FGLPVFFFPLVLNAYLLVLLL), 171–191 (ATVMLVDLVLDPGAVAIGFWI), 199–219 (GVPWQNYAGWLLSGSVAVLLF), and 254–274 (LFYTNWVPFGLAALLGAGLLW).

It belongs to the BABR hydratase family.

Its subcellular location is the membrane. It carries out the reaction bacterioruberin = bisanhydrobacterioruberin + 2 H2O. It participates in carotenoid biosynthesis. Its function is as follows. Involved in the biosynthesis of the acyclic C50 carotenoid bacterioruberin (BR). Catalyzes the reaction that introduces hydroxyl groups to C3'' and C3''' of bisanhydrobacterioruberin (BABR) to generate BR. The sequence is that of Bisanhydrobacterioruberin hydratase from Haloarcula japonica (strain ATCC 49778 / DSM 6131 / JCM 7785 / NBRC 101032 / NCIMB 13157 / TR-1).